The sequence spans 282 residues: Halorhodopsin (282 aa).

Topologically, residues 1-29 (MMETAADALASGTVPLEMTQTQIFEAIQG) are extracellular. A helical transmembrane segment spans residues 30 to 55 (DTLLASSLWINIALAGLSILLFVYMG). At 56–61 (RNLEDP) the chain is on the cytoplasmic side. A helical transmembrane segment spans residues 62-85 (RAQLIFVATLMVPLVSISSYTGLV). Residues 86 to 109 (SGLTVSFLEMPAGHALAGQEVLTP) are Extracellular-facing. Residues 110-131 (WGRYLTWALSTPMILVALGLLA) form a helical membrane-spanning segment. At 132-134 (GSN) the chain is on the cytoplasmic side. A helical transmembrane segment spans residues 135–158 (ATKLFTAVTADIGMCVTGLAAALT). Topologically, residues 159-161 (TSS) are extracellular. Residues 162-184 (YLLRWVWYVISCAFFVVVLYVLL) form a helical membrane-spanning segment. Topologically, residues 185-196 (AEWAEDAEVAGT) are cytoplasmic. Residues 197-220 (AEIFNTLKLLTVVLWLGYPIFWAL) traverse the membrane as a helical segment. At 221–229 (GAEGLAVLD) the chain is on the extracellular side. Residues 230 to 258 (VAVTSWAYSGMDIVAKYLFAFLLLRWVVD) traverse the membrane as a helical segment. N6-(retinylidene)lysine is present on lysine 245. At 259–282 (NERTVAGMAAGLGAPLARCAPADD) the chain is on the cytoplasmic side.

The protein belongs to the archaeal/bacterial/fungal opsin family.

The protein resides in the cell membrane. In terms of biological role, light-driven chloride pump. The sequence is that of Halorhodopsin (hop) from Halorubrum sodomense.